Reading from the N-terminus, the 403-residue chain is Histidine decarboxylase (403 aa).

His120 is a binding site for substrate. Lys233 carries the post-translational modification N6-(pyridoxal phosphate)lysine.

Belongs to the group II decarboxylase family. In terms of assembly, homotetramer. The cofactor is pyridoxal 5'-phosphate.

It catalyses the reaction L-histidine + H(+) = histamine + CO2. The polypeptide is Histidine decarboxylase (Pseudomonas entomophila (strain L48)).